Reading from the N-terminus, the 225-residue chain is Ribonuclease 3 (225 aa).

Residues 7–129 (MPRLCRTLGY…IIGAVYIDSG (123 aa)) enclose the RNase III domain. Glu42 is a Mg(2+) binding site. Asp46 is a catalytic residue. Asp115 and Glu118 together coordinate Mg(2+). Glu118 is a catalytic residue. A DRBM domain is found at 155–225 (DPKTLLQELL…AADALELMKR (71 aa)).

Belongs to the ribonuclease III family. In terms of assembly, homodimer. The cofactor is Mg(2+).

It localises to the cytoplasm. The catalysed reaction is Endonucleolytic cleavage to 5'-phosphomonoester.. In terms of biological role, digests double-stranded RNA. Involved in the processing of primary rRNA transcript to yield the immediate precursors to the large and small rRNAs (23S and 16S). Processes some mRNAs, and tRNAs when they are encoded in the rRNA operon. Processes pre-crRNA and tracrRNA of type II CRISPR loci if present in the organism. The protein is Ribonuclease 3 of Shewanella sediminis (strain HAW-EB3).